A 221-amino-acid chain; its full sequence is Deoxyribose-phosphate aldolase (221 aa).

The active-site Proton donor/acceptor is the Asp91. The active-site Schiff-base intermediate with acetaldehyde is Lys153. Lys182 functions as the Proton donor/acceptor in the catalytic mechanism.

Belongs to the DeoC/FbaB aldolase family. DeoC type 1 subfamily.

The protein localises to the cytoplasm. It carries out the reaction 2-deoxy-D-ribose 5-phosphate = D-glyceraldehyde 3-phosphate + acetaldehyde. It functions in the pathway carbohydrate degradation; 2-deoxy-D-ribose 1-phosphate degradation; D-glyceraldehyde 3-phosphate and acetaldehyde from 2-deoxy-alpha-D-ribose 1-phosphate: step 2/2. Its function is as follows. Catalyzes a reversible aldol reaction between acetaldehyde and D-glyceraldehyde 3-phosphate to generate 2-deoxy-D-ribose 5-phosphate. This Clostridium botulinum (strain Alaska E43 / Type E3) protein is Deoxyribose-phosphate aldolase.